The sequence spans 109 residues: MSAQPVDIQIFGRSLRVNCPPEQQEALNQAAEDLNQRLQDLKVRTRVTNTEQLVFIAALNVCHELAQERGKTRDYASNMEQRIRMLQQTIEQALLEQGKITDRQGTQFE.

The stretch at 21-99 (PEQQEALNQA…IEQALLEQGK (79 aa)) forms a coiled coil.

Belongs to the ZapA family. Type 1 subfamily. Homodimer. Interacts with FtsZ.

Its subcellular location is the cytoplasm. Activator of cell division through the inhibition of FtsZ GTPase activity, therefore promoting FtsZ assembly into bundles of protofilaments necessary for the formation of the division Z ring. It is recruited early at mid-cell but it is not essential for cell division. In Pectobacterium atrosepticum (strain SCRI 1043 / ATCC BAA-672) (Erwinia carotovora subsp. atroseptica), this protein is Cell division protein ZapA.